Consider the following 1121-residue polypeptide: MGNIKFLLLVFFLIVVVVNGCWEEERNALLELQTNIMSSNGELLVDWAGYNAAHFVDCCFWDRVKCSLETGRVIKLDLEADFGTGDGWLFNASLFLPFKSLQVLLLSSQNIIGWTKNEGFSKLRQLPNLKEVDLQYNPIDPKVLLSSLCWISSLEVLKLGVDVDTSFSIPMTYNTNMMSKKCGGLSNLRELWFEGYEINDINILSALGELRNLEKLILDDNNFNSTIFSSLKIFPSLKHLNLAANEINGNVEMNDIIDLSNLEYLDLSDNNIHSFATTKGNKKMTSLRSLLLGSSYSNSSRVIRSLKSFSSLKSLSYKNSNLTSPSIIYALRNLSTVEYLYFKGSSLNDNFLPNIGQMTSLKVLNMPSGGNNGTLPNQGWCELKYIEELDFLNNNFVGTLPLCLGNLTSLRWLSLAGNNLHGNIASHSIWRRLTSLEYLDIADNQFDVPLSFSQFSDHKKLIYLNVGYNTIITDTEYQNWIPNFQLEFFAIQRCIALQKLPSFLHYQYDLRILAIEGNQLQGKFPTWLLENNTRLAAIYGRDNAFSGPLKLPSSVHLHLEAVDVSNNKLNGHIPQNMSLAFPKLLSLNMSHNHLEGPIPSKISGIYLTILDLSVNFLSGEVPGDLAVVDSPQLFYLRLSNNKLKGKIFSEEFRPHVLSFLYLNDNNFEGALPSNVFLSSLITLDASRNNFSGEIPGCTRDNRRLLQLDLSKNHLQGLIPVEICNLKIINVLAISENKISGSIPSCVSSLPLKHIHLQKNQLGGELGHVIFNFSSLITLDLRYNNFAGNIPYTIGSLSNLNYLLLSNNKLEGDIPTQICMLNNLSIVDLSFNKLYGPLPPCLGYLTQTKKDAEISWTYFAENYRGSWLNFVIWMRSKRHYHDSHGLLSDLFLMDVETQVQFSTKKNSYTYKGNILKYMSGIDLSSNRLTGEIPVELGNMSNIHALNLSHNHLNGRIPNTFSNLQEIESLDLSCNRLNGSIPVGLLELNSLAVFSVAYNNLSGAVPDFKAQFGTFNKSSYEGNPFLCGYPLDNKCGMSPKLSNTSNINGDEESSELEDIQCFYIGFVVSFGAILLGLAAALCLNRHWRRAWFRMIEALMFYCYYFVLDNIVTPIKSRWYKNVG.

The signal sequence occupies residues 1 to 20 (MGNIKFLLLVFFLIVVVVNG). Residues 21 to 1058 (CWEEERNALL…EESSELEDIQ (1038 aa)) lie on the Extracellular side of the membrane. Residue N91 is glycosylated (N-linked (GlcNAc...) asparagine). 8 LRR repeats span residues 98 to 122 (FKSL…GFSK), 126 to 152 (LPNL…CWIS), 185 to 209 (LSNL…ALGE), 210 to 233 (LRNL…SLKI), 234 to 259 (FPSL…IIDL), 260 to 282 (SNLE…KGNK), 284 to 308 (MTSL…SLKS), and 309 to 331 (FSSL…IYAL). Residue N224 is glycosylated (N-linked (GlcNAc...) asparagine). 3 N-linked (GlcNAc...) asparagine glycosylation sites follow: N298, N321, and N333. An LRR 9 repeat occupies 334-360 (LSTVEYLYFKGSSLNDNFLPNIGQMTS). N-linked (GlcNAc...) asparagine glycosylation is found at N372 and N406. LRR repeat units lie at residues 383 to 406 (LKYI…CLGN), 407 to 432 (LTSL…IWRR), 433 to 457 (LTSL…QFSD), 459 to 479 (KKLI…EYQN), 507 to 531 (QYDL…LLEN), 556 to 580 (HLHL…MSLA), 581 to 605 (FPKL…ISGI), 607 to 628 (LTIL…LAVV), 630 to 654 (SPQL…EFRP), 655 to 678 (HVLS…VFLS), 680 to 701 (LITL…TRDN), 702 to 725 (RRLL…ICNL), 726 to 749 (KIIN…VSSL), 751 to 772 (LKHI…IFNF), 773 to 796 (SSLI…IGSL), 797 to 820 (SNLN…ICML), 822 to 846 (NLSI…YLTQ), 914 to 938 (LKYM…LGNM), 939 to 961 (SNIH…TFSN), 962 to 986 (LQEI…LLEL), and 988 to 1012 (SLAV…QFGT). N-linked (GlcNAc...) asparagine glycans are attached at residues N531, N576, and N588. An N-linked (GlcNAc...) asparagine glycan is attached at N689. N771 carries N-linked (GlcNAc...) asparagine glycosylation. 7 N-linked (GlcNAc...) asparagine glycosylation sites follow: N822, N937, N945, N976, N998, N1014, and N1041. Residues 1059-1079 (CFYIGFVVSFGAILLGLAAAL) form a helical membrane-spanning segment. The Cytoplasmic portion of the chain corresponds to 1080 to 1121 (CLNRHWRRAWFRMIEALMFYCYYFVLDNIVTPIKSRWYKNVG).

It belongs to the RLP family. In terms of assembly, interacts with an 11 kDa glycine-rich protein (GRP) of C.reflexa. Interacts with SOBIR1 and SOBIR1-like kinases; presence or absence of GRP has no effect on interaction.

Its subcellular location is the cell membrane. The protein resides in the cell surface. In terms of biological role, involved in plant defense. Contributes to resistance against parasitic plant C.reflexa. Acts as a receptor for the 11 kDa glycine-rich protein (GRP) of C.reflexa inducing immune responses such as emission of stress-related phytohormone ethylene, reactive oxygen species (ROS) release, and hypersensitive cell death. Recognizes a specific pathogen-associated molecular pattern (PAMP), a cysteine-rich peptide 21 (crip21), from GRP located on the cell wall of C.reflexa. This Solanum lycopersicum (Tomato) protein is Cuscuta receptor 1.